Here is a 168-residue protein sequence, read N- to C-terminus: Variant surface antigen D (168 aa).

Residues 1–29 (MKKSIFSKKLLVSFGSLVTLAAIPLIAIS) form the signal peptide. A lipid anchor (N-palmitoyl cysteine) is attached at cysteine 30. Cysteine 30 carries the S-diacylglycerol cysteine lipid modification. The segment at 33–168 (TNTDQSQQPG…STSTSNMNTR (136 aa)) is disordered. Low complexity-rich tracts occupy residues 35-44 (TDQSQQPGSG) and 52-71 (GTTTGTDSTTGGQTGSESGT). Over residues 72–81 (TTGGQTGTTT) the composition is skewed to gly residues. Tandem repeats lie at residues 81–92 (TGGQSDSTSTSK), 93–104 (EQGSSDSTSTSK), 105–116 (EQGSSDSTSTSK), 117–128 (EQGSSDSTSTSK), 129–140 (EQGSSDSTSTSK), 141–152 (EQGSSDSTSTSK), and 153–164 (EQGSSDSTSTSN). The 7 X 12 AA tandem repeats stretch occupies residues 81–164 (TGGQSDSTST…GSSDSTSTSN (84 aa)). Over residues 82 to 168 (GGQSDSTSTS…STSTSNMNTR (87 aa)) the composition is skewed to low complexity.

Its subcellular location is the cell membrane. Functionally, responsible for the antigenic diversity for host adaptation. Expression in E.coli of a construct containing vlpD, vlpE, and vlpF yields antigenically distinguishable products corresponding to each gene. This Mesomycoplasma hyorhinis (Mycoplasma hyorhinis) protein is Variant surface antigen D (vlpD).